We begin with the raw amino-acid sequence, 77 residues long: Acyl carrier protein (77 aa).

The 76-residue stretch at 2–77 folds into the Carrier domain; sequence SDIADRVKKI…DAVKFISDAS (76 aa). Residue serine 37 is modified to O-(pantetheine 4'-phosphoryl)serine.

This sequence belongs to the acyl carrier protein (ACP) family. 4'-phosphopantetheine is transferred from CoA to a specific serine of apo-ACP by AcpS. This modification is essential for activity because fatty acids are bound in thioester linkage to the sulfhydryl of the prosthetic group.

The protein resides in the cytoplasm. It functions in the pathway lipid metabolism; fatty acid biosynthesis. Its function is as follows. Carrier of the growing fatty acid chain in fatty acid biosynthesis. The protein is Acyl carrier protein of Roseobacter denitrificans (strain ATCC 33942 / OCh 114) (Erythrobacter sp. (strain OCh 114)).